The following is a 238-amino-acid chain: Purine nucleoside phosphorylase DeoD-type (238 aa).

His-5 provides a ligand contact to a purine D-ribonucleoside. Phosphate contacts are provided by residues Gly-21, Arg-25, Arg-44, and 88–91 (RIGS). A purine D-ribonucleoside is bound by residues 180–182 (EME) and 204–205 (SD). Asp-205 (proton donor) is an active-site residue.

It belongs to the PNP/UDP phosphorylase family. In terms of assembly, homohexamer; trimer of homodimers.

The catalysed reaction is a purine D-ribonucleoside + phosphate = a purine nucleobase + alpha-D-ribose 1-phosphate. The enzyme catalyses a purine 2'-deoxy-D-ribonucleoside + phosphate = a purine nucleobase + 2-deoxy-alpha-D-ribose 1-phosphate. In terms of biological role, catalyzes the reversible phosphorolytic breakdown of the N-glycosidic bond in the beta-(deoxy)ribonucleoside molecules, with the formation of the corresponding free purine bases and pentose-1-phosphate. This chain is Purine nucleoside phosphorylase DeoD-type, found in Xenorhabdus nematophila (strain ATCC 19061 / DSM 3370 / CCUG 14189 / LMG 1036 / NCIMB 9965 / AN6).